The sequence spans 607 residues: MAGFPGKEAGPPGGWRKCQEDESPENERHENFYAEIDDFAPSVLTPTGSDSGAGEEDDDGLYQVPTHWPPLMAPTGLSGERVPCRTQAAVTSNTGNSPGSRHTSCPFTLPRGAQPPAPAHQKPTAPTPKPRSRECGPSKTPDPFSWFRKTSCTEGGADSTSRSFMYQKGFEEGLAGLGLDDKSDCESEDESNFRRPSSHSALKQKNGGKGKPSGLFEHLAAHGREFSKLSKHAAQLKRLSGSVMNVLNLDDAQDTRQAKAQRKESTRVPIVIHLTNHVPVIKPACSLFLEGAPGVGKTTMLNHLKAVFGDLTIVVPEPMRYWTHVYENAIKAMHKNVTRARHGREDTSAEVLACQMKFTTPFRVLASRKRSLLVTESGARSVAPLDCWILHDRHLLSASVVFPLMLLRSQLLSYSDFIQVLATFTADPGDTIVWMKLNVEENMRRLKKRGRKHESGLDAGYLKSVNDAYHAVYCAWLLTQYFAPEDIVKVCAGLTTITTVCHQSHTPIIRSGVAEKLYKNSIYSVLKEVIQPYRADAVLLEVCLAFTRTLAYLQFVLVDLSEFQDDLPGCWTEIYMQALKNPAIRSQFFDWAGLSKVISDFERGNRD.

Disordered stretches follow at residues 1–160 (MAGF…ADST) and 180–215 (DDKSDCESEDESNFRRPSSHSALKQKNGGKGKPSGL). Positions 17–32 (KCQEDESPENERHENF) are enriched in basic and acidic residues. Composition is skewed to polar residues over residues 88 to 106 (AAVTSNTGNSPGSRHTSCP), 148 to 160 (RKTSCTEGGADST), and 194 to 203 (RRPSSHSALK). 291–298 (GAPGVGKT) contributes to the ATP binding site. The active-site Proton acceptor is the E317. Q355 contacts substrate. R445 lines the ATP pocket. R451 provides a ligand contact to substrate.

The protein belongs to the herpesviridae thymidine kinase family. In terms of assembly, homodimer.

It localises to the virion tegument. The protein resides in the host nucleus. It catalyses the reaction thymidine + ATP = dTMP + ADP + H(+). In terms of biological role, catalyzes the transfer of the gamma-phospho group of ATP to thymidine to generate dTMP in the salvage pathway of pyrimidine synthesis. The dTMP serves as a substrate for DNA polymerase during viral DNA replication. Allows the virus to be reactivated and to grow in non-proliferative cells lacking a high concentration of phosphorylated nucleic acid precursors. This Epstein-Barr virus (strain GD1) (HHV-4) protein is Thymidine kinase.